We begin with the raw amino-acid sequence, 217 residues long: Large ribosomal subunit protein bL25 (217 aa).

Positions 185 to 217 (TKETVEDEEAEEAAAEGAEETGETGETEEGGDE) are disordered. Over residues 189 to 217 (VEDEEAEEAAAEGAEETGETGETEEGGDE) the composition is skewed to acidic residues.

It belongs to the bacterial ribosomal protein bL25 family. CTC subfamily. Part of the 50S ribosomal subunit; part of the 5S rRNA/L5/L18/L25 subcomplex. Contacts the 5S rRNA. Binds to the 5S rRNA independently of L5 and L18.

In terms of biological role, this is one of the proteins that binds to the 5S RNA in the ribosome where it forms part of the central protuberance. This chain is Large ribosomal subunit protein bL25, found in Desulfosudis oleivorans (strain DSM 6200 / JCM 39069 / Hxd3) (Desulfococcus oleovorans).